The chain runs to 225 residues: 2-C-methyl-D-erythritol 4-phosphate cytidylyltransferase (225 aa).

The protein belongs to the IspD/TarI cytidylyltransferase family. IspD subfamily.

The catalysed reaction is 2-C-methyl-D-erythritol 4-phosphate + CTP + H(+) = 4-CDP-2-C-methyl-D-erythritol + diphosphate. It functions in the pathway isoprenoid biosynthesis; isopentenyl diphosphate biosynthesis via DXP pathway; isopentenyl diphosphate from 1-deoxy-D-xylulose 5-phosphate: step 2/6. In terms of biological role, catalyzes the formation of 4-diphosphocytidyl-2-C-methyl-D-erythritol from CTP and 2-C-methyl-D-erythritol 4-phosphate (MEP). The polypeptide is 2-C-methyl-D-erythritol 4-phosphate cytidylyltransferase (Haemophilus influenzae (strain 86-028NP)).